The primary structure comprises 478 residues: Cytochrome c-552 (478 aa).

The first 26 residues, 1–26 (MARKTLRARRFFSLIFPFFFITSVYA), serve as a signal peptide directing secretion. Heme c is bound at residue His94. The heme site is built by Cys122, Cys125, and Lys126. Heme c is bound by residues Cys160, Cys163, His164, Cys209, Cys212, and His213. Glu215, Tyr216, Lys261, and Gln263 together coordinate Ca(2+). Tyr216 is a substrate binding site. His264 contributes to the substrate binding site. Heme c is bound by residues His275, Cys282, Cys285, His286, His301, Cys314, Cys317, His318, and His393.

The protein belongs to the cytochrome c-552 family. Ca(2+) serves as cofactor. Heme c is required as a cofactor.

The protein localises to the periplasm. It catalyses the reaction 6 Fe(III)-[cytochrome c] + NH4(+) + 2 H2O = 6 Fe(II)-[cytochrome c] + nitrite + 8 H(+). Its pathway is nitrogen metabolism; nitrate reduction (assimilation). Its function is as follows. Catalyzes the reduction of nitrite to ammonia, consuming six electrons in the process. In Salmonella dublin (strain CT_02021853), this protein is Cytochrome c-552.